The primary structure comprises 447 residues: 3-phosphoshikimate 1-carboxyvinyltransferase (447 aa).

Lys36, Ser37, and Arg41 together coordinate 3-phosphoshikimate. Lys36 contacts phosphoenolpyruvate. Positions 109 and 138 each coordinate phosphoenolpyruvate. Positions 183, 185, 333, and 360 each coordinate 3-phosphoshikimate. Position 185 (Gln185) interacts with phosphoenolpyruvate. Catalysis depends on Asp333, which acts as the Proton acceptor. Phosphoenolpyruvate contacts are provided by Arg364 and Arg406.

This sequence belongs to the EPSP synthase family. As to quaternary structure, monomer.

The protein resides in the cytoplasm. The enzyme catalyses 3-phosphoshikimate + phosphoenolpyruvate = 5-O-(1-carboxyvinyl)-3-phosphoshikimate + phosphate. The protein operates within metabolic intermediate biosynthesis; chorismate biosynthesis; chorismate from D-erythrose 4-phosphate and phosphoenolpyruvate: step 6/7. Functionally, catalyzes the transfer of the enolpyruvyl moiety of phosphoenolpyruvate (PEP) to the 5-hydroxyl of shikimate-3-phosphate (S3P) to produce enolpyruvyl shikimate-3-phosphate and inorganic phosphate. The sequence is that of 3-phosphoshikimate 1-carboxyvinyltransferase from Synechocystis sp. (strain ATCC 27184 / PCC 6803 / Kazusa).